The following is a 326-amino-acid chain: tRNA-modifying protein YgfZ (326 aa).

Folate is bound by residues Trp-27 and Trp-189.

It belongs to the tRNA-modifying YgfZ family.

Its subcellular location is the cytoplasm. Functionally, folate-binding protein involved in regulating the level of ATP-DnaA and in the modification of some tRNAs. It is probably a key factor in regulatory networks that act via tRNA modification, such as initiation of chromosomal replication. This chain is tRNA-modifying protein YgfZ, found in Escherichia coli O6:K15:H31 (strain 536 / UPEC).